The following is a 235-amino-acid chain: Non-structural maintenance of chromosomes element 1 homolog (235 aa).

The RING-type; atypical zinc-finger motif lies at 181 to 225 (IKNCTLCKCLVLWDIRCGSCNIQYHRGCIQTYLQRRDICPSCGNL). Position 185 is a phosphothreonine (Thr185).

It belongs to the NSE1 family. In terms of assembly, component of the Smc5-Smc6 complex which consists at least of Smc5, Smc6, Nse1, Nse2, Nse4 and MAGE. Nse1, Nse4 and MAGE probably form a subcomplex that bridges the head domains of the Smc5-Smc6 heterodimer. Interacts with MAGE and Nse4.

The protein resides in the nucleus. The enzyme catalyses S-ubiquitinyl-[E2 ubiquitin-conjugating enzyme]-L-cysteine + [acceptor protein]-L-lysine = [E2 ubiquitin-conjugating enzyme]-L-cysteine + N(6)-ubiquitinyl-[acceptor protein]-L-lysine.. Its function is as follows. Component of the SMC5-SMC6 complex, a complex involved in repair of DNA double-strand breaks by homologous recombination. The complex may promote sister chromatid homologous recombination by recruiting the SMC1-SMC3 cohesin complex to double-strand breaks. This is Non-structural maintenance of chromosomes element 1 homolog from Drosophila melanogaster (Fruit fly).